We begin with the raw amino-acid sequence, 193 residues long: Large ribosomal subunit protein bL12cy (193 aa).

Residues 1–59 (MAATTLSIATTIRSSSFSSGLASAHHFPSRPLSIEFPFSFGVSSSSTLSHRAIYLHPIS) constitute a chloroplast transit peptide. A compositionally biased stretch (basic and acidic residues) spans 170 to 187 (GVTKDEAEEDKTQLEEAG). The disordered stretch occupies residues 170–193 (GVTKDEAEEDKTQLEEAGAKVSIV).

It belongs to the bacterial ribosomal protein bL12 family.

The protein resides in the plastid. It localises to the chloroplast. In Arabidopsis thaliana (Mouse-ear cress), this protein is Large ribosomal subunit protein bL12cy (RPL12B).